The sequence spans 369 residues: Transmembrane protein adipocyte-associated 1 (369 aa).

N20 carries an N-linked (GlcNAc...) asparagine glycan. The next 7 helical transmembrane spans lie at 45–65, 73–93, 120–140, 148–168, 189–209, 237–257, and 262–282; these read LLLL…LPLA, SSPI…VGIA, FFLL…GHLE, VLAI…TLEI, QFWL…VILP, LLQG…LCCV, and FLYF…GFFG. A glycan (N-linked (GlcNAc...) asparagine) is linked at N329.

The protein belongs to the UPF0359 family. As to expression, ubiquitous, with higher levels in heart, brain, lung, liver and kidney.

Its subcellular location is the membrane. In Mus musculus (Mouse), this protein is Transmembrane protein adipocyte-associated 1 (Tpra1).